Consider the following 1344-residue polypeptide: MDCIEVRGFYSSTEEQNPEQQADISENISSLFSLKEQQKMSEYSGLASNHSQMIAEDSEIQPKPEHSPEVLQEDIEMSSGSSGNDFSGNETNENYSSGHDSHGHESDENGKDSAMLMESSDCHKSSSSNAFSLMIANSEHNQSSSGCSSEQSTKAKTQKELLKTLQELKAHLPAEKRIKGKSSVLTTLKYALKSIKQVKANEEYYQLLMINESQPSGLNVSSYTVEEVETITSEYIMKNADMFAVAVSLITGKIVYISDQAAAILRCKRSYFKNAKFVELLAPQDVSVFYTSTTPYRLPSWNICSRAESSTQDCMEEKSFFCRISAGKERENEICYHPFRMTPYLIKVQDPEVAEDQLCCVLLAEKVHSGYEAPRIPPDKRIFTTTHTPTCLFQDVDERAVPLLGYLPQDLIGTPVLVHLHPNDRPLMLAIHKKILQYGGQPFDYSPIRFCTRNGDYITMDTSWSSFINPWSRKVSFIIGRHKVRTGPLNEDVFAAPNYTEDRILHPSVQEITEQIYRLLLQPVHNSGSSGYGSLGSNGSHEHLMSVASSSDSTGNNNDDTQKDKTISQDARKVKTKGQHIFTENKGKLEYKREPSAEKQNGPGGQVKDVIGKDTTATAAPKNVATEELAWKEQPVYSYQQISCLDSVIRYLESCNVPGTAKRKCEPSSSVNSSVHEQKASVNAIQPLGDSTVLKSSGKSSGPPVVGAHLTSLALPGKPESVVSLTSQCSYSSTIVHVGDKKPQPELEMIEDGPSGAEVLDTQLPAPPPSSTHVNQEKESFKKLGLTKEVLAVHTQKEEQSFLNKFKEIKRFNIFQSHCNYYLQDKPKGRPGERGGRGQRNGTSGMDQPWKKSGKNRKSKRIKPQESSDSTTSGTKFPHRFPLQGLNTTAWSPSDTSQASYSAMSFPTVMPAYPLPVFPAAAGTVPPAPETSVSGFNQLPDSGNTCSMQPSQFSAPLMTPVVALVLPNYVYPEMNNSLPQTLYHSQANFPTHPAFSSQTVFPAQPPFTTPSPFPQQAFFPMQPFHYNPPAEIEKVPVTETRNEPSRSCTPQSVGPQDQASPPLFQSRCSSPLNLLQLEENTKTVESGAPAGLHGALNEEGTIGKIMTTDAGSGKGSLPAESPMDAQNSDALSMSSVLLDILLQEDACSGTGSASSGSGVSAAAESLGSGSNGCDMSGSRTGSSETSHTSKYFGSIDSSENHHKTKMKAEIEESEHFIKYVLQDPIWLLMANTDDTVMMTYQLPSRDLETVLKEDKLKLKQMQKLQPKFTEDQKRELIEVHPWIQQGGLPKTVANSECIFCEDNIQSNFYTSYDEEIHEMDLNEMIEDSGENNLVPLSQVNEEQT.

Disordered regions lie at residues 1–21 (MDCI…PEQQ) and 42–112 (EYSG…NGKD). Over residues 10–21 (YSSTEEQNPEQQ) the composition is skewed to polar residues. Over residues 78–89 (SSGSSGNDFSGN) the composition is skewed to low complexity. A compositionally biased stretch (basic and acidic residues) spans 99–111 (HDSHGHESDENGK). The short motif at 161–170 (LLKTLQELKA) is the Nuclear export signal 1 element. Residues 231–298 (ITSEYIMKNA…FYTSTTPYRL (68 aa)) form the PAS 1 domain. Positions 358–362 (LCCVL) match the LXXLL motif. In terms of domain architecture, PAS 2 spans 371–437 (YEAPRIPPDK…MLAIHKKILQ (67 aa)). The PAC domain occupies 445–488 (YSPIRFCTRNGDYITMDTSWSSFINPWSRKVSFIIGRHKVRTGP). Residues 512-521 (ITEQIYRLLL) carry the Nuclear export signal 2 motif. 5 disordered regions span residues 531 to 609 (GYGS…QVKD), 661 to 686 (AKRK…NAIQ), 823 to 894 (LQDK…WSPS), 1038 to 1065 (TETR…PLFQ), and 1107 to 1126 (TTDA…MDAQ). Positions 549–559 (SSSDSTGNNND) are enriched in low complexity. Basic and acidic residues-rich tracts occupy residues 560–573 (DTQK…DARK) and 583–597 (TENK…EPSA). The segment covering 667-684 (PSSSVNSSVHEQKASVNA) has biased composition (polar residues). Residues 825 to 836 (DKPKGRPGERGG) show a composition bias toward basic and acidic residues. A Nuclear localization signal motif is present at residues 851–865 (KKSGKNRKSKRIKPQ). Residues 852–862 (KSGKNRKSKRI) are compositionally biased toward basic residues. 3 stretches are compositionally biased toward polar residues: residues 865-875 (QESSDSTTSGT), 885-894 (GLNTTAWSPS), and 1045-1059 (SRSC…QDQA). Residues 1138–1142 (LDILL) carry the LXXLL motif. Residues 1149 to 1172 (GTGSASSGSGVSAAAESLGSGSNG) are compositionally biased toward low complexity. The disordered stretch occupies residues 1149 to 1197 (GTGSASSGSGVSAAAESLGSGSNGCDMSGSRTGSSETSHTSKYFGSIDS). Polar residues predominate over residues 1177–1197 (GSRTGSSETSHTSKYFGSIDS). The segment at 1244-1344 (SRDLETVLKE…PLSQVNEEQT (101 aa)) is CRY binding domain.

Component of the circadian clock oscillator which includes the CRY proteins, CLOCK or NPAS2, BMAL1 or BMAL2, CSNK1E, and the PER proteins. Interacts directly with PER3, and through a C-terminal domain, with CRY1 and CRY2.

Its subcellular location is the nucleus. It localises to the cytoplasm. Transcriptional repressor which forms a core component of the circadian clock. The circadian clock, an internal time-keeping system, regulates various physiological processes through the generation of approximately 24 hour circadian rhythms in gene expression, which are translated into rhythms in metabolism and behavior. It is derived from the Latin roots 'circa' (about) and 'diem' (day) and acts as an important regulator of a wide array of physiological functions including metabolism, sleep, body temperature, blood pressure, endocrine, immune, cardiovascular, and renal function. Consists of two major components: the central clock, residing in the suprachiasmatic nucleus (SCN) of the brain, and the peripheral clocks that are present in nearly every tissue and organ system. Both the central and peripheral clocks can be reset by environmental cues, also known as Zeitgebers (German for 'timegivers'). The predominant Zeitgeber for the central clock is light, which is sensed by retina and signals directly to the SCN. The central clock entrains the peripheral clocks through neuronal and hormonal signals, body temperature and feeding-related cues, aligning all clocks with the external light/dark cycle. Circadian rhythms allow an organism to achieve temporal homeostasis with its environment at the molecular level by regulating gene expression to create a peak of protein expression once every 24 hours to control when a particular physiological process is most active with respect to the solar day. Transcription and translation of core clock components (CLOCK, NPAS2, BMAL1, BMAL2, PER1, PER2, PER3, CRY1 and CRY2) plays a critical role in rhythm generation, whereas delays imposed by post-translational modifications (PTMs) are important for determining the period (tau) of the rhythms (tau refers to the period of a rhythm and is the length, in time, of one complete cycle). A diurnal rhythm is synchronized with the day/night cycle, while the ultradian and infradian rhythms have a period shorter and longer than 24 hours, respectively. Disruptions in the circadian rhythms contribute to the pathology of cardiovascular diseases, cancer, metabolic syndrome and aging. A transcription/translation feedback loop (TTFL) forms the core of the molecular circadian clock mechanism. Transcription factors, CLOCK or NPAS2 and BMAL1 or BMAL2, form the positive limb of the feedback loop, act in the form of a heterodimer and activate the transcription of core clock genes and clock-controlled genes (involved in key metabolic processes), harboring E-box elements (5'-CACGTG-3') within their promoters. The core clock genes: PER1/2/3 and CRY1/2 which are transcriptional repressors form the negative limb of the feedback loop and interact with the CLOCK|NPAS2-BMAL1|BMAL2 heterodimer inhibiting its activity and thereby negatively regulating their own expression. This heterodimer also activates nuclear receptors NR1D1/2 and RORA/B/G, which form a second feedback loop and which activate and repress BMAL1 transcription, respectively. PER1 and PER2 proteins transport CRY1 and CRY2 into the nucleus with appropriate circadian timing, but also contribute directly to repression of clock-controlled target genes through interaction with several classes of RNA-binding proteins, helicases and others transcriptional repressors. PER appears to regulate circadian control of transcription by at least three different modes. First, interacts directly with the CLOCK-BMAL1 at the tail end of the nascent transcript peak to recruit complexes containing the SIN3-HDAC that remodel chromatin to repress transcription. Second, brings H3K9 methyltransferases such as SUV39H1 and SUV39H2 to the E-box elements of the circadian target genes, like PER2 itself or PER1. The recruitment of each repressive modifier to the DNA seems to be very precisely temporally orchestrated by the large PER complex, the deacetylases acting before than the methyltransferases. Additionally, large PER complexes are also recruited to the target genes 3' termination site through interactions with RNA-binding proteins and helicases that may play a role in transcription termination to regulate transcription independently of CLOCK-BMAL1 interactions. The polypeptide is Period circadian protein homolog 2 (PER2) (Gallus gallus (Chicken)).